Consider the following 457-residue polypeptide: G-protein coupled receptor 135 (457 aa).

Residues 1–26 (MEEQARPPGRPAASATLQGSAHPGGA) are disordered. Residues 1–64 (MEEQARPPGR…EAAGSRGPAP (64 aa)) lie on the Extracellular side of the membrane. A glycan (N-linked (GlcNAc...) asparagine) is linked at N47. The chain crosses the membrane as a helical span at residues 65–85 (LLWHGAAVAAQALVLLLIFLL). Over 86–109 (SSLGNCAVMGVIVKHRQLRTVTNA) the chain is Cytoplasmic. The chain crosses the membrane as a helical span at residues 110 to 130 (FILSLSLSDLLTALLCLPAAF). Over 131–156 (LDLFAPPGDSGPWRSFCAASRFFSSC) the chain is Extracellular. The chain crosses the membrane as a helical span at residues 157–177 (FGIVSTFSVALISLDRYCAIV). The Cytoplasmic portion of the chain corresponds to 178 to 189 (RPPRDKLGRRRA). The chain crosses the membrane as a helical span at residues 190-210 (LQLLAGAWLAALGFSLPWDLL). Over 211–235 (RAPREPPAPQSFHRCLYRTSPDPAQ) the chain is Extracellular. The helical transmembrane segment at 236–256 (LGVAYSVGLVVACYLLPFLLM) threads the bilayer. Residues 257–295 (CFCRYHICKTVRLSDVRVRPMTTYARVLRFFSEVRTATT) lie on the Cytoplasmic side of the membrane. A helical transmembrane segment spans residues 296–316 (VLIMIIFVMCCWGPYCFLVLL). Topologically, residues 317–329 (AATRQGQATQAPS) are extracellular. Residues 330–350 (LLNVAAVWLTWANGAINPVIY) traverse the membrane as a helical segment. The Cytoplasmic segment spans residues 351-457 (AIRNPNISML…HNSETRDSSI (107 aa)).

This sequence belongs to the G-protein coupled receptor 1 family. In terms of assembly, interacts with MTNR1B. Interacts with ARRB1 and ARRB2 in a spontaneous and agonist-independent manner; leading to the internalization of GPR135 in the endosomal compartment.

The protein resides in the cell membrane. It localises to the endosome membrane. In terms of biological role, orphan receptor. Has spontaneous activity for beta-arrestin recruitment. Shows a reciprocal regulatory interaction with the melatonin receptor MTNR1B most likely through receptor heteromerization. The chain is G-protein coupled receptor 135 (Gpr135) from Mus musculus (Mouse).